Here is a 299-residue protein sequence, read N- to C-terminus: Tyrosine recombinase XerC (299 aa).

In terms of domain architecture, Core-binding (CB) spans 1–85; sequence MQADLDAFLD…ALRGFYRYLL (85 aa). The Tyr recombinase domain maps to 106–285; sequence RLPRTLDADR…DFQHLAAVYD (180 aa). Catalysis depends on residues Arg-146, Lys-170, His-237, Arg-240, and His-263. Residue Tyr-272 is the O-(3'-phospho-DNA)-tyrosine intermediate of the active site.

This sequence belongs to the 'phage' integrase family. XerC subfamily. Forms a cyclic heterotetrameric complex composed of two molecules of XerC and two molecules of XerD.

It localises to the cytoplasm. Functionally, site-specific tyrosine recombinase, which acts by catalyzing the cutting and rejoining of the recombining DNA molecules. The XerC-XerD complex is essential to convert dimers of the bacterial chromosome into monomers to permit their segregation at cell division. It also contributes to the segregational stability of plasmids. This is Tyrosine recombinase XerC from Azotobacter vinelandii (strain DJ / ATCC BAA-1303).